Consider the following 236-residue polypeptide: MKTQIYKGSSKILYSAEEDFLLIMAFSDNGILESGEIIEVSGKGVLNNNISSFLMDKLEMIGIENHFIEKINMREQLIQYVEVFPVQVIISSVACGRFVKEFGMDEGYVFDKPIIDFKVRSREFKYPIVNEYQILNFSWLTLDEIKAVKEQALRIYAFLSGLFMGVGIRLVECKLEFGRVLNGEESIIMLTDEISPDNCRLWHIHSNEKLGFELLENKPNKAFESYQLIADRLKEK.

It belongs to the SAICAR synthetase family.

The catalysed reaction is 5-amino-1-(5-phospho-D-ribosyl)imidazole-4-carboxylate + L-aspartate + ATP = (2S)-2-[5-amino-1-(5-phospho-beta-D-ribosyl)imidazole-4-carboxamido]succinate + ADP + phosphate + 2 H(+). The protein operates within purine metabolism; IMP biosynthesis via de novo pathway; 5-amino-1-(5-phospho-D-ribosyl)imidazole-4-carboxamide from 5-amino-1-(5-phospho-D-ribosyl)imidazole-4-carboxylate: step 1/2. The chain is Phosphoribosylaminoimidazole-succinocarboxamide synthase from Rickettsia akari (strain Hartford).